Reading from the N-terminus, the 155-residue chain is Histone H3-like 3 (155 aa).

Positions 34-59 (IGVKLPNSYRPGDQTVCKPAPPTDGV) are disordered.

It belongs to the histone H3 family. In terms of assembly, the nucleosome is a histone octamer containing two molecules each of H2A, H2B, H3 and H4 assembled in one H3-H4 heterotetramer and two H2A-H2B heterodimers. The octamer wraps approximately 147 bp of DNA. In terms of tissue distribution, pollen specific.

The protein resides in the nucleus. Its subcellular location is the chromosome. Functionally, core component of nucleosome. Nucleosomes wrap and compact DNA into chromatin, limiting DNA accessibility to the cellular machineries which require DNA as a template. Histones thereby play a central role in transcription regulation, DNA repair, DNA replication and chromosomal stability. DNA accessibility is regulated via a complex set of post-translational modifications of histones, also called histone code, and nucleosome remodeling. This chain is Histone H3-like 3 (leH3), found in Lilium longiflorum (Trumpet lily).